A 680-amino-acid chain; its full sequence is Anosmin-1 (680 aa).

The first 24 residues, 1-24 (MVPGVPGAVLTLCLWLAASSGCLA), serve as a signal peptide directing secretion. Disulfide bonds link Cys49/Cys83, Cys53/Cys77, Cys86/Cys105, Cys90/Cys101, and Cys116/Cys120. Residue Asn71 is glycosylated (N-linked (GlcNAc...) asparagine). Residues 127–176 (LLVKQGDCPAPEKASGFAAACVESCEVDNECSGVKKCCSNGCGHTCQVPK) enclose the WAP domain. Fibronectin type-III domains lie at 186–287 (PRKE…SKDP), 292–400 (APAN…THAT), 425–523 (PTRP…TPPC), and 550–658 (KPEN…LPPS). N-linked (GlcNAc...) asparagine glycans are attached at residues Asn209, Asn300, Asn470, Asn553, and Asn564. The segment at 642 to 680 (EGPATIKTFRTPELPPSSAHRSHLKHRHPHHYKPSPERY) is disordered. The span at 661-674 (HRSHLKHRHPHHYK) shows a compositional bias: basic residues.

Interacts with FGFR1; this interaction does not interfere with FGF2-binding to FGFR1. Binds heparin. Heparin may promote or interfere with ANOS1-FGFR1-FGF2 complex formation depending on the sequential order of its binding to the various constituents. For instance, heparin-ANOS1 interaction favors subsequent binding to pre-existing binary FGFR1-FGF2 complex, while heparin-FGF2 complex does not interact with ANOS1-FGFR1. N-glycosylated. Post-translationally, may be proteolytically cleaved at the cell surface and released from the cell surface. Expressed in the cerebellum (at protein level).

The protein resides in the cell membrane. Its subcellular location is the secreted. In terms of biological role, has a dual branch-promoting and guidance activity, which may play an important role in the patterning of mitral and tufted cell collaterals to the olfactory cortex. Chemoattractant for fetal olfactory epithelial cells. This is Anosmin-1 from Homo sapiens (Human).